Here is a 321-residue protein sequence, read N- to C-terminus: Biotin synthase (321 aa).

Positions 37 to 264 (RDMELCTLSS…TSVIRLSAGR (228 aa)) constitute a Radical SAM core domain. Residues cysteine 52, cysteine 56, and cysteine 59 each contribute to the [4Fe-4S] cluster site. Residues cysteine 96, cysteine 127, cysteine 187, and arginine 259 each coordinate [2Fe-2S] cluster.

This sequence belongs to the radical SAM superfamily. Biotin synthase family. In terms of assembly, homodimer. [4Fe-4S] cluster serves as cofactor. The cofactor is [2Fe-2S] cluster.

The enzyme catalyses (4R,5S)-dethiobiotin + (sulfur carrier)-SH + 2 reduced [2Fe-2S]-[ferredoxin] + 2 S-adenosyl-L-methionine = (sulfur carrier)-H + biotin + 2 5'-deoxyadenosine + 2 L-methionine + 2 oxidized [2Fe-2S]-[ferredoxin]. It participates in cofactor biosynthesis; biotin biosynthesis; biotin from 7,8-diaminononanoate: step 2/2. In terms of biological role, catalyzes the conversion of dethiobiotin (DTB) to biotin by the insertion of a sulfur atom into dethiobiotin via a radical-based mechanism. The chain is Biotin synthase from Coxiella burnetii (strain CbuK_Q154) (Coxiella burnetii (strain Q154)).